The primary structure comprises 387 residues: 17-beta-hydroxysteroid dehydrogenase type 2 (387 aa).

The helical; Signal-anchor for type II membrane protein transmembrane segment at 4–24 (FFSDTAWICLAVPTVLCGTVF) threads the bilayer. 82–111 (QKAVLVTGGDCGLGHALCKYLDELGFTVFA) is an NAD(+) binding site. Residue serine 219 participates in substrate binding. Residue tyrosine 232 is part of the active site.

Belongs to the short-chain dehydrogenases/reductases (SDR) family. As to quaternary structure, homodimer. In terms of tissue distribution, expressed in placenta.

It localises to the endoplasmic reticulum membrane. The catalysed reaction is 17beta-estradiol + NAD(+) = estrone + NADH + H(+). It carries out the reaction testosterone + NAD(+) = androst-4-ene-3,17-dione + NADH + H(+). It catalyses the reaction 17beta-hydroxy-5alpha-androstan-3-one + NAD(+) = 5alpha-androstan-3,17-dione + NADH + H(+). The enzyme catalyses (20S)-hydroxypregn-4-en-3-one + NAD(+) = progesterone + NADH + H(+). Catalyzes the NAD-dependent oxidation of the highly active 17beta-hydroxysteroids, such as estradiol (E2), testosterone (T), and dihydrotestosterone (DHT), to their less active forms and thus regulates the biological potency of these steroids. Oxidizes estradiol to estrone, testosterone to androstenedione, and dihydrotestosterone to 5alpha-androstan-3,17-dione. Also has 20-alpha-HSD activity. This chain is 17-beta-hydroxysteroid dehydrogenase type 2, found in Homo sapiens (Human).